A 292-amino-acid chain; its full sequence is Ribosomal RNA small subunit methyltransferase A (292 aa).

N29, L31, G56, E77, D102, and N127 together coordinate S-adenosyl-L-methionine.

It belongs to the class I-like SAM-binding methyltransferase superfamily. rRNA adenine N(6)-methyltransferase family. RsmA subfamily.

It localises to the cytoplasm. It catalyses the reaction adenosine(1518)/adenosine(1519) in 16S rRNA + 4 S-adenosyl-L-methionine = N(6)-dimethyladenosine(1518)/N(6)-dimethyladenosine(1519) in 16S rRNA + 4 S-adenosyl-L-homocysteine + 4 H(+). In terms of biological role, specifically dimethylates two adjacent adenosines (A1518 and A1519) in the loop of a conserved hairpin near the 3'-end of 16S rRNA in the 30S particle. May play a critical role in biogenesis of 30S subunits. In Bacillus subtilis (strain 168), this protein is Ribosomal RNA small subunit methyltransferase A.